The sequence spans 351 residues: Phospho-N-acetylmuramoyl-pentapeptide-transferase (351 aa).

Transmembrane regions (helical) follow at residues 17–37, 61–83, 88–105, 130–150, 158–178, 190–210, 230–250, 254–274, 279–299, and 328–348; these read TAYATIFAFLLALIFGPFIIS, MGIPTMGGVLIFFCVLVSLFFWI, IYFLIVLFVMVSFACLGF, ILFSFISVVMLYYFGGEHVSI, SLKLDLGILYIPFGMFVLISA, GLAIGLSIVVIGALIIIAYLT, LVIFLGALLGGSFGFLWFNAY, IMMGDTGSLSIGAVLGMVALI, ILFAILAGVFVVETLSVIIQV, and QVVIRFWIIGLIFAILALSTI.

Belongs to the glycosyltransferase 4 family. MraY subfamily. It depends on Mg(2+) as a cofactor.

The protein resides in the cell inner membrane. The enzyme catalyses UDP-N-acetyl-alpha-D-muramoyl-L-alanyl-gamma-D-glutamyl-meso-2,6-diaminopimeloyl-D-alanyl-D-alanine + di-trans,octa-cis-undecaprenyl phosphate = di-trans,octa-cis-undecaprenyl diphospho-N-acetyl-alpha-D-muramoyl-L-alanyl-D-glutamyl-meso-2,6-diaminopimeloyl-D-alanyl-D-alanine + UMP. Its pathway is cell wall biogenesis; peptidoglycan biosynthesis. Catalyzes the initial step of the lipid cycle reactions in the biosynthesis of the cell wall peptidoglycan: transfers peptidoglycan precursor phospho-MurNAc-pentapeptide from UDP-MurNAc-pentapeptide onto the lipid carrier undecaprenyl phosphate, yielding undecaprenyl-pyrophosphoryl-MurNAc-pentapeptide, known as lipid I. This chain is Phospho-N-acetylmuramoyl-pentapeptide-transferase, found in Borrelia duttonii (strain Ly).